We begin with the raw amino-acid sequence, 95 residues long: Aspartyl/glutamyl-tRNA(Asn/Gln) amidotransferase subunit C (95 aa).

Belongs to the GatC family. As to quaternary structure, heterotrimer of A, B and C subunits.

The enzyme catalyses L-glutamyl-tRNA(Gln) + L-glutamine + ATP + H2O = L-glutaminyl-tRNA(Gln) + L-glutamate + ADP + phosphate + H(+). It catalyses the reaction L-aspartyl-tRNA(Asn) + L-glutamine + ATP + H2O = L-asparaginyl-tRNA(Asn) + L-glutamate + ADP + phosphate + 2 H(+). Its function is as follows. Allows the formation of correctly charged Asn-tRNA(Asn) or Gln-tRNA(Gln) through the transamidation of misacylated Asp-tRNA(Asn) or Glu-tRNA(Gln) in organisms which lack either or both of asparaginyl-tRNA or glutaminyl-tRNA synthetases. The reaction takes place in the presence of glutamine and ATP through an activated phospho-Asp-tRNA(Asn) or phospho-Glu-tRNA(Gln). The sequence is that of Aspartyl/glutamyl-tRNA(Asn/Gln) amidotransferase subunit C from Maricaulis maris (strain MCS10) (Caulobacter maris).